The sequence spans 226 residues: Large ribosomal subunit protein uL3 (226 aa).

It belongs to the universal ribosomal protein uL3 family. Part of the 50S ribosomal subunit. Forms a cluster with proteins L14 and L19.

Functionally, one of the primary rRNA binding proteins, it binds directly near the 3'-end of the 23S rRNA, where it nucleates assembly of the 50S subunit. The sequence is that of Large ribosomal subunit protein uL3 from Sulfurihydrogenibium sp. (strain YO3AOP1).